Reading from the N-terminus, the 159-residue chain is MHCPFCNAADSKVIDSRLAAEGCQIRRRRECISCGERFTTFESYEVVMPRVIKSNGKNEPFDEAKLRRSLMHALQKRPVTQEQIEAVLSDIQLKIRRLGERDVKSRMIGEIVMQALFALDHVAYVRFASVYQDFQDVEAFRRQIEQMQQREQECEKHDV.

A zinc finger lies at 3 to 34; that stretch reads CPFCNAADSKVIDSRLAAEGCQIRRRRECISC. The 91-residue stretch at 49–139 folds into the ATP-cone domain; sequence PRVIKSNGKN…VYQDFQDVEA (91 aa).

This sequence belongs to the NrdR family. It depends on Zn(2+) as a cofactor.

Its function is as follows. Negatively regulates transcription of bacterial ribonucleotide reductase nrd genes and operons by binding to NrdR-boxes. This is Transcriptional repressor NrdR from Acinetobacter baylyi (strain ATCC 33305 / BD413 / ADP1).